The following is a 76-amino-acid chain: Esculentin-2CG1 (76 aa).

The N-terminal stretch at 1 to 22 (MFTMKKSMLLLFFLGTISLSLC) is a signal peptide. The propeptide at 23–37 (EEERSADEDDGEEEV) is removed in mature form. Cys-70 and Cys-76 are disulfide-bonded.

As to expression, expressed by the skin glands.

It localises to the secreted. Antimicrobial peptide active against a variety of Gram-positive and some Gram-negative bacterial strains. Has antifungal activity against a slime mold isolate. Has hemolytic activity against human erythrocytes. This Amolops chunganensis (Chungan torrent frog) protein is Esculentin-2CG1.